The primary structure comprises 882 residues: Alanine--tRNA ligase (882 aa).

Residues His571, His575, Cys673, and His677 each contribute to the Zn(2+) site.

It belongs to the class-II aminoacyl-tRNA synthetase family. Zn(2+) is required as a cofactor.

The protein localises to the cytoplasm. The enzyme catalyses tRNA(Ala) + L-alanine + ATP = L-alanyl-tRNA(Ala) + AMP + diphosphate. Catalyzes the attachment of alanine to tRNA(Ala) in a two-step reaction: alanine is first activated by ATP to form Ala-AMP and then transferred to the acceptor end of tRNA(Ala). Also edits incorrectly charged Ser-tRNA(Ala) and Gly-tRNA(Ala) via its editing domain. This chain is Alanine--tRNA ligase, found in Desulfotalea psychrophila (strain LSv54 / DSM 12343).